The sequence spans 458 residues: Phosphoglucosamine mutase (458 aa).

Serine 106 (phosphoserine intermediate) is an active-site residue. The Mg(2+) site is built by serine 106, aspartate 247, aspartate 249, and aspartate 251. Serine 106 is subject to Phosphoserine.

Belongs to the phosphohexose mutase family. Mg(2+) serves as cofactor. Post-translationally, activated by phosphorylation.

It carries out the reaction alpha-D-glucosamine 1-phosphate = D-glucosamine 6-phosphate. Catalyzes the conversion of glucosamine-6-phosphate to glucosamine-1-phosphate. This is Phosphoglucosamine mutase from Chlamydia trachomatis serovar L2 (strain ATCC VR-902B / DSM 19102 / 434/Bu).